The chain runs to 86 residues: Exodeoxyribonuclease 7 small subunit (86 aa).

The protein belongs to the XseB family. As to quaternary structure, heterooligomer composed of large and small subunits.

The protein resides in the cytoplasm. It carries out the reaction Exonucleolytic cleavage in either 5'- to 3'- or 3'- to 5'-direction to yield nucleoside 5'-phosphates.. Its function is as follows. Bidirectionally degrades single-stranded DNA into large acid-insoluble oligonucleotides, which are then degraded further into small acid-soluble oligonucleotides. This chain is Exodeoxyribonuclease 7 small subunit, found in Agrobacterium fabrum (strain C58 / ATCC 33970) (Agrobacterium tumefaciens (strain C58)).